A 156-amino-acid polypeptide reads, in one-letter code: ATP synthase subunit b (156 aa).

A helical membrane pass occupies residues 7–27 (LFAQIIVFFGLVWFTMKFVWP).

It belongs to the ATPase B chain family. As to quaternary structure, F-type ATPases have 2 components, F(1) - the catalytic core - and F(0) - the membrane proton channel. F(1) has five subunits: alpha(3), beta(3), gamma(1), delta(1), epsilon(1). F(0) has three main subunits: a(1), b(2) and c(10-14). The alpha and beta chains form an alternating ring which encloses part of the gamma chain. F(1) is attached to F(0) by a central stalk formed by the gamma and epsilon chains, while a peripheral stalk is formed by the delta and b chains.

Its subcellular location is the cell inner membrane. F(1)F(0) ATP synthase produces ATP from ADP in the presence of a proton or sodium gradient. F-type ATPases consist of two structural domains, F(1) containing the extramembraneous catalytic core and F(0) containing the membrane proton channel, linked together by a central stalk and a peripheral stalk. During catalysis, ATP synthesis in the catalytic domain of F(1) is coupled via a rotary mechanism of the central stalk subunits to proton translocation. Functionally, component of the F(0) channel, it forms part of the peripheral stalk, linking F(1) to F(0). This Neisseria meningitidis serogroup C (strain 053442) protein is ATP synthase subunit b.